Here is a 142-residue protein sequence, read N- to C-terminus: Clock-controlled protein 6 (142 aa).

Belongs to the SED1 family.

The sequence is that of Clock-controlled protein 6 (ccg-6) from Neurospora crassa (strain ATCC 24698 / 74-OR23-1A / CBS 708.71 / DSM 1257 / FGSC 987).